The following is a 440-amino-acid chain: Chromosome partition protein MukF (440 aa).

The interval 208–236 (LSETSGTLRELQDTLEAAGDKLQANLLRI) is leucine-zipper.

The protein belongs to the MukF family. Interacts, and probably forms a ternary complex, with MukE and MukB via its C-terminal region. The complex formation is stimulated by calcium or magnesium. It is required for an interaction between MukE and MukB.

The protein resides in the cytoplasm. It localises to the nucleoid. Involved in chromosome condensation, segregation and cell cycle progression. May participate in facilitating chromosome segregation by condensation DNA from both sides of a centrally located replisome during cell division. Not required for mini-F plasmid partitioning. Probably acts via its interaction with MukB and MukE. Overexpression results in anucleate cells. It has a calcium binding activity. This chain is Chromosome partition protein MukF, found in Salmonella arizonae (strain ATCC BAA-731 / CDC346-86 / RSK2980).